A 174-amino-acid chain; its full sequence is Peptide deformylase (174 aa).

Residues Cys96 and His138 each contribute to the Fe cation site. The active site involves Glu139. Fe cation is bound at residue His142.

Belongs to the polypeptide deformylase family. It depends on Fe(2+) as a cofactor.

The enzyme catalyses N-terminal N-formyl-L-methionyl-[peptide] + H2O = N-terminal L-methionyl-[peptide] + formate. In terms of biological role, removes the formyl group from the N-terminal Met of newly synthesized proteins. Requires at least a dipeptide for an efficient rate of reaction. N-terminal L-methionine is a prerequisite for activity but the enzyme has broad specificity at other positions. In Helicobacter pylori (strain HPAG1), this protein is Peptide deformylase.